The primary structure comprises 489 residues: Long chain base biosynthesis protein 2d (489 aa).

A helical membrane pass occupies residues 4 to 24 (LPYVTALTTLFSYGLLFAFGQ). The residue at position 311 (K311) is an N6-(pyridoxal phosphate)lysine.

Belongs to the class-II pyridoxal-phosphate-dependent aminotransferase family. As to quaternary structure, heterodimer with LCB1. Component of the serine palmitoyltransferase (SPT) complex, composed of LCB1 and LCB2. The cofactor is pyridoxal 5'-phosphate.

Its subcellular location is the endoplasmic reticulum membrane. It catalyses the reaction L-serine + hexadecanoyl-CoA + H(+) = 3-oxosphinganine + CO2 + CoA. It participates in lipid metabolism; sphingolipid metabolism. Its function is as follows. Serine palmitoyltransferase (SPT). The heterodimer formed with LCB1 constitutes the catalytic core. This Oryza sativa subsp. japonica (Rice) protein is Long chain base biosynthesis protein 2d.